The following is a 270-amino-acid chain: UPF0354 protein BT9727_4425 (270 aa).

It belongs to the UPF0354 family.

The sequence is that of UPF0354 protein BT9727_4425 from Bacillus thuringiensis subsp. konkukian (strain 97-27).